Reading from the N-terminus, the 356-residue chain is tRNA N6-adenosine threonylcarbamoyltransferase (356 aa).

Residues His-110 and His-114 each coordinate Fe cation. Residues 133 to 137, Asp-166, Gly-179, and Asn-276 each bind substrate; that span reads LVSGG. Asp-304 contributes to the Fe cation binding site.

This sequence belongs to the KAE1 / TsaD family. It depends on Fe(2+) as a cofactor.

The protein resides in the cytoplasm. The catalysed reaction is L-threonylcarbamoyladenylate + adenosine(37) in tRNA = N(6)-L-threonylcarbamoyladenosine(37) in tRNA + AMP + H(+). Functionally, required for the formation of a threonylcarbamoyl group on adenosine at position 37 (t(6)A37) in tRNAs that read codons beginning with adenine. Is involved in the transfer of the threonylcarbamoyl moiety of threonylcarbamoyl-AMP (TC-AMP) to the N6 group of A37, together with TsaE and TsaB. TsaD likely plays a direct catalytic role in this reaction. This chain is tRNA N6-adenosine threonylcarbamoyltransferase, found in Teredinibacter turnerae (strain ATCC 39867 / T7901).